The following is a 432-amino-acid chain: MSSTTLTDDQIRDNERTEVLAKATAAKNIVPDIAVLGTGPKNAILRAAADELVARSAEIIEANASDIEAGRANGMEESMIDRLALDESRIEGIAGGLRQVAGLTDPVGEVLRGHVMENGIQMKQVRVPLGVMGMVYEARPNVTVDAFGLALKSGNVALLRGSSTAVHSNTKLVEILQDVLERFELPRETVQLLPCQTRGSVQDLITARGLVDVVIPRGGAGLINAVVTGATVPTIETGTGNCHFYIDAEAKLDQAIAMVINGKTRRCSVCNATETALLDAALSDSDKLAVVQALQEAGVTIHGRVAELEAFGATDVVEATETDWDSEYLSFDIAVAVVDGVDGALAHIAKYSTKHTEAIATQNIETAQRFADRVDAAAVMINASTAYTDGEQYGMGAEIGISTQKLHARGPMALPELTSTKWILQGTGQIRP.

This sequence belongs to the gamma-glutamyl phosphate reductase family.

The protein localises to the cytoplasm. The catalysed reaction is L-glutamate 5-semialdehyde + phosphate + NADP(+) = L-glutamyl 5-phosphate + NADPH + H(+). It participates in amino-acid biosynthesis; L-proline biosynthesis; L-glutamate 5-semialdehyde from L-glutamate: step 2/2. Functionally, catalyzes the NADPH-dependent reduction of L-glutamate 5-phosphate into L-glutamate 5-semialdehyde and phosphate. The product spontaneously undergoes cyclization to form 1-pyrroline-5-carboxylate. The sequence is that of Gamma-glutamyl phosphate reductase from Corynebacterium glutamicum (strain R).